The following is a 250-amino-acid chain: Ubiquinone/menaquinone biosynthesis C-methyltransferase UbiE (250 aa).

Residues threonine 73, aspartate 94, 122–123 (NA), and serine 139 contribute to the S-adenosyl-L-methionine site.

It belongs to the class I-like SAM-binding methyltransferase superfamily. MenG/UbiE family.

The enzyme catalyses a 2-demethylmenaquinol + S-adenosyl-L-methionine = a menaquinol + S-adenosyl-L-homocysteine + H(+). It carries out the reaction a 2-methoxy-6-(all-trans-polyprenyl)benzene-1,4-diol + S-adenosyl-L-methionine = a 5-methoxy-2-methyl-3-(all-trans-polyprenyl)benzene-1,4-diol + S-adenosyl-L-homocysteine + H(+). It functions in the pathway quinol/quinone metabolism; menaquinone biosynthesis; menaquinol from 1,4-dihydroxy-2-naphthoate: step 2/2. Its pathway is cofactor biosynthesis; ubiquinone biosynthesis. Its function is as follows. Methyltransferase required for the conversion of demethylmenaquinol (DMKH2) to menaquinol (MKH2) and the conversion of 2-polyprenyl-6-methoxy-1,4-benzoquinol (DDMQH2) to 2-polyprenyl-3-methyl-6-methoxy-1,4-benzoquinol (DMQH2). This chain is Ubiquinone/menaquinone biosynthesis C-methyltransferase UbiE, found in Francisella tularensis subsp. tularensis (strain FSC 198).